The chain runs to 69 residues: uncharacterized protein (69 aa).

A disordered region spans residues 23-46; it reads AENEGNRKENRRQMQSRNERGCNV. Over residues 26-44 the composition is skewed to basic and acidic residues; sequence EGNRKENRRQMQSRNERGC.

This is an uncharacterized protein from Homo sapiens (Human).